Here is a 497-residue protein sequence, read N- to C-terminus: Sperm motility kinase Z (497 aa).

The 248-residue stretch at tyrosine 28–leucine 275 folds into the Protein kinase domain. Residues leucine 34–valine 42 and lysine 57 each bind ATP. The active-site Proton acceptor is the aspartate 146. The UBA domain occupies phenylalanine 292–alanine 332. 2 disordered regions span residues threonine 383–glutamine 410 and serine 439–leucine 460.

Belongs to the protein kinase superfamily. CAMK Ser/Thr protein kinase family. Smok subfamily.

It catalyses the reaction L-seryl-[protein] + ATP = O-phospho-L-seryl-[protein] + ADP + H(+). The enzyme catalyses L-threonyl-[protein] + ATP = O-phospho-L-threonyl-[protein] + ADP + H(+). In terms of biological role, may play a role in sperm motility, especially in the regulation of flagellar function. In Mus musculus (Mouse), this protein is Sperm motility kinase Z (Gm4922).